Here is a 438-residue protein sequence, read N- to C-terminus: Xaa-Pro dipeptidase 2 (438 aa).

Positions 242, 253, 333, 378, and 414 each coordinate Mn(2+).

This sequence belongs to the peptidase M24B family. Bacterial-type prolidase subfamily. Requires Mn(2+) as cofactor.

The catalysed reaction is Xaa-L-Pro dipeptide + H2O = an L-alpha-amino acid + L-proline. Functionally, splits dipeptides with a prolyl residue in the C-terminal position. In Idiomarina loihiensis (strain ATCC BAA-735 / DSM 15497 / L2-TR), this protein is Xaa-Pro dipeptidase 2.